Reading from the N-terminus, the 459-residue chain is Exodeoxyribonuclease 7 large subunit (459 aa).

It belongs to the XseA family. Heterooligomer composed of large and small subunits.

Its subcellular location is the cytoplasm. It catalyses the reaction Exonucleolytic cleavage in either 5'- to 3'- or 3'- to 5'-direction to yield nucleoside 5'-phosphates.. Functionally, bidirectionally degrades single-stranded DNA into large acid-insoluble oligonucleotides, which are then degraded further into small acid-soluble oligonucleotides. This chain is Exodeoxyribonuclease 7 large subunit, found in Pseudomonas fluorescens (strain Pf0-1).